A 110-amino-acid chain; its full sequence is Large ribosomal subunit protein uL22 (110 aa).

It belongs to the universal ribosomal protein uL22 family. As to quaternary structure, part of the 50S ribosomal subunit.

Functionally, this protein binds specifically to 23S rRNA; its binding is stimulated by other ribosomal proteins, e.g. L4, L17, and L20. It is important during the early stages of 50S assembly. It makes multiple contacts with different domains of the 23S rRNA in the assembled 50S subunit and ribosome. Its function is as follows. The globular domain of the protein is located near the polypeptide exit tunnel on the outside of the subunit, while an extended beta-hairpin is found that lines the wall of the exit tunnel in the center of the 70S ribosome. This chain is Large ribosomal subunit protein uL22, found in Paraburkholderia phytofirmans (strain DSM 17436 / LMG 22146 / PsJN) (Burkholderia phytofirmans).